The primary structure comprises 647 residues: 1-deoxy-D-xylulose-5-phosphate synthase (647 aa).

Thiamine diphosphate-binding positions include His-88 and 129–131; that span reads GHA. Mg(2+) is bound at residue Asp-160. Thiamine diphosphate contacts are provided by residues 161–162, Asn-189, Tyr-300, and Glu-377; that span reads GA. Asn-189 contributes to the Mg(2+) binding site.

The protein belongs to the transketolase family. DXPS subfamily. As to quaternary structure, homodimer. The cofactor is Mg(2+). Thiamine diphosphate is required as a cofactor.

The enzyme catalyses D-glyceraldehyde 3-phosphate + pyruvate + H(+) = 1-deoxy-D-xylulose 5-phosphate + CO2. Its pathway is metabolic intermediate biosynthesis; 1-deoxy-D-xylulose 5-phosphate biosynthesis; 1-deoxy-D-xylulose 5-phosphate from D-glyceraldehyde 3-phosphate and pyruvate: step 1/1. Functionally, catalyzes the acyloin condensation reaction between C atoms 2 and 3 of pyruvate and glyceraldehyde 3-phosphate to yield 1-deoxy-D-xylulose-5-phosphate (DXP). This Dehalococcoides mccartyi (strain ATCC BAA-2266 / KCTC 15142 / 195) (Dehalococcoides ethenogenes (strain 195)) protein is 1-deoxy-D-xylulose-5-phosphate synthase.